The sequence spans 485 residues: Glutamyl-tRNA(Gln) amidotransferase subunit A 1 (485 aa).

Catalysis depends on charge relay system residues lysine 79 and serine 154. Residue serine 178 is the Acyl-ester intermediate of the active site.

Belongs to the amidase family. GatA subfamily. As to quaternary structure, heterotrimer of A, B and C subunits.

The enzyme catalyses L-glutamyl-tRNA(Gln) + L-glutamine + ATP + H2O = L-glutaminyl-tRNA(Gln) + L-glutamate + ADP + phosphate + H(+). In terms of biological role, allows the formation of correctly charged Gln-tRNA(Gln) through the transamidation of misacylated Glu-tRNA(Gln) in organisms which lack glutaminyl-tRNA synthetase. The reaction takes place in the presence of glutamine and ATP through an activated gamma-phospho-Glu-tRNA(Gln). The chain is Glutamyl-tRNA(Gln) amidotransferase subunit A 1 (gatA1) from Clostridium acetobutylicum (strain ATCC 824 / DSM 792 / JCM 1419 / IAM 19013 / LMG 5710 / NBRC 13948 / NRRL B-527 / VKM B-1787 / 2291 / W).